The chain runs to 359 residues: Photosystem II protein D1 1 (359 aa).

The next 3 membrane-spanning stretches (helical) occupy residues 29–46 (YVGW…AATI), 118–133 (HFLI…EWEL), and 142–156 (WICV…AASA). His-118 contacts chlorophyll a. Pheophytin a is bound at residue Tyr-126. Residues Asp-170 and Glu-189 each coordinate [CaMn4O5] cluster. Residues 197–218 (FHMLGVAGVFGGSLFSAMHGSL) form a helical membrane-spanning segment. Residue His-198 participates in chlorophyll a binding. A quinone contacts are provided by residues His-215 and 264 to 265 (SF). His-215 contacts Fe cation. Position 272 (His-272) interacts with Fe cation. Residues 274 to 288 (FLAAWPVVGIWFTAL) form a helical membrane-spanning segment. The [CaMn4O5] cluster site is built by His-332, Glu-333, Asp-342, and Ala-344. The propeptide occupies 345 to 359 (AAESTPVALQAPAIG).

The protein belongs to the reaction center PufL/M/PsbA/D family. As to quaternary structure, PSII is composed of 1 copy each of membrane proteins PsbA, PsbB, PsbC, PsbD, PsbE, PsbF, PsbH, PsbI, PsbJ, PsbK, PsbL, PsbM, PsbT, PsbX, PsbY, PsbZ, Psb30/Ycf12, peripheral proteins PsbO, CyanoQ (PsbQ), PsbU, PsbV and a large number of cofactors. It forms dimeric complexes. The D1/D2 heterodimer binds P680, chlorophylls that are the primary electron donor of PSII, and subsequent electron acceptors. It shares a non-heme iron and each subunit binds pheophytin, quinone, additional chlorophylls, carotenoids and lipids. D1 provides most of the ligands for the Mn4-Ca-O5 cluster of the oxygen-evolving complex (OEC). There is also a Cl(-1) ion associated with D1 and D2, which is required for oxygen evolution. The PSII complex binds additional chlorophylls, carotenoids and specific lipids. serves as cofactor. Post-translationally, tyr-161 forms a radical intermediate that is referred to as redox-active TyrZ, YZ or Y-Z. In terms of processing, C-terminally processed by CtpA; processing is essential to allow assembly of the oxygen-evolving complex and thus photosynthetic growth.

Its subcellular location is the cellular thylakoid membrane. It carries out the reaction 2 a plastoquinone + 4 hnu + 2 H2O = 2 a plastoquinol + O2. Photosystem II (PSII) is a light-driven water:plastoquinone oxidoreductase that uses light energy to abstract electrons from H(2)O, generating O(2) and a proton gradient subsequently used for ATP formation. It consists of a core antenna complex that captures photons, and an electron transfer chain that converts photonic excitation into a charge separation. The D1/D2 (PsbA/PsbD) reaction center heterodimer binds P680, the primary electron donor of PSII as well as several subsequent electron acceptors. The polypeptide is Photosystem II protein D1 1 (Synechococcus sp. (strain CC9605)).